Reading from the N-terminus, the 145-residue chain is Shadow of prion protein (145 aa).

A signal peptide spans 1–24; sequence MNWAAAVCWALLLAATFLCDGSAA. Asparagine 105 carries N-linked (GlcNAc...) asparagine glycosylation. Residue serine 119 is the site of GPI-anchor amidated serine attachment. A propeptide spans 120–145 (removed in mature form); the sequence is GAGPTGHRHLCPLLGGALGALRLLRP.

This sequence belongs to the SPRN family. In terms of processing, N-glycosylated. Mainly expressed in brain.

Its subcellular location is the cell membrane. Functionally, prion-like protein that has PrP(C)-like neuroprotective activity. May act as a modulator for the biological actions of normal and abnormal PrP. The sequence is that of Shadow of prion protein (SPRN) from Ovis aries (Sheep).